The chain runs to 231 residues: Orotate phosphoribosyltransferase (231 aa).

5-phospho-alpha-D-ribose 1-diphosphate contacts are provided by residues Lys-27, 79-80 (YK), Arg-106, Lys-107, Lys-110, His-112, and 133-141 (DDVMTAGTA). Thr-137 and Arg-166 together coordinate orotate.

This sequence belongs to the purine/pyrimidine phosphoribosyltransferase family. PyrE subfamily. In terms of assembly, homodimer. Mg(2+) is required as a cofactor.

It catalyses the reaction orotidine 5'-phosphate + diphosphate = orotate + 5-phospho-alpha-D-ribose 1-diphosphate. The protein operates within pyrimidine metabolism; UMP biosynthesis via de novo pathway; UMP from orotate: step 1/2. Functionally, catalyzes the transfer of a ribosyl phosphate group from 5-phosphoribose 1-diphosphate to orotate, leading to the formation of orotidine monophosphate (OMP). The protein is Orotate phosphoribosyltransferase of Bifidobacterium longum (strain DJO10A).